The primary structure comprises 1036 residues: Protein P200 (1036 aa).

The interval 697 to 727 (ETSELNTESDPSFEPEVEIQPEPEPNFDLET) is disordered. Over residues 707 to 727 (PSFEPEVEIQPEPEPNFDLET) the composition is skewed to acidic residues. A run of 3 repeats spans residues 718–723 (EPEPNF), 738–743 (EPEPNF), and 776–781 (EPEPNF). The 3 X 6 AA repeats of E-P-E-P-N-F stretch occupies residues 718-781 (EPEPNFDLET…SFESEPEPNF (64 aa)). Disordered stretches follow at residues 757 to 784 (FESE…FETE) and 798 to 845 (EAEV…ETEA). The span at 773–784 (FESEPEPNFETE) shows a compositional bias: acidic residues.

It is found in the cell projection. The protein resides in the attachment organelle. Protein cytoskeleton-associated which plays a role in gliding motility and perhaps also in mucociliary clearance. In Mycoplasma pneumoniae (strain ATCC 29342 / M129 / Subtype 1) (Mycoplasmoides pneumoniae), this protein is Protein P200 (p200).